The chain runs to 446 residues: Glutamyl-tRNA reductase (446 aa).

Substrate is bound by residues 49 to 52 (TCNR), Ser-109, 114 to 116 (ETQ), and Gln-120. Residue Cys-50 is the Nucleophile of the active site. 189–194 (GAGETG) is an NADP(+) binding site.

Belongs to the glutamyl-tRNA reductase family. Homodimer.

The catalysed reaction is (S)-4-amino-5-oxopentanoate + tRNA(Glu) + NADP(+) = L-glutamyl-tRNA(Glu) + NADPH + H(+). It participates in porphyrin-containing compound metabolism; protoporphyrin-IX biosynthesis; 5-aminolevulinate from L-glutamyl-tRNA(Glu): step 1/2. Catalyzes the NADPH-dependent reduction of glutamyl-tRNA(Glu) to glutamate 1-semialdehyde (GSA). The sequence is that of Glutamyl-tRNA reductase from Exiguobacterium sibiricum (strain DSM 17290 / CCUG 55495 / CIP 109462 / JCM 13490 / 255-15).